The chain runs to 58 residues: Large ribosomal subunit protein bL32 (58 aa).

Positions 1–19 (MAVPKRKTSKSNTKMRRAA) are enriched in basic residues. The segment at 1–22 (MAVPKRKTSKSNTKMRRAANSK) is disordered.

Belongs to the bacterial ribosomal protein bL32 family.

The sequence is that of Large ribosomal subunit protein bL32 from Clostridioides difficile (strain 630) (Peptoclostridium difficile).